A 257-amino-acid polypeptide reads, in one-letter code: Imidazole glycerol phosphate synthase subunit HisF (257 aa).

Residues Asp11 and Asp130 contribute to the active site.

The protein belongs to the HisA/HisF family. Heterodimer of HisH and HisF.

The protein localises to the cytoplasm. The enzyme catalyses 5-[(5-phospho-1-deoxy-D-ribulos-1-ylimino)methylamino]-1-(5-phospho-beta-D-ribosyl)imidazole-4-carboxamide + L-glutamine = D-erythro-1-(imidazol-4-yl)glycerol 3-phosphate + 5-amino-1-(5-phospho-beta-D-ribosyl)imidazole-4-carboxamide + L-glutamate + H(+). Its pathway is amino-acid biosynthesis; L-histidine biosynthesis; L-histidine from 5-phospho-alpha-D-ribose 1-diphosphate: step 5/9. Its function is as follows. IGPS catalyzes the conversion of PRFAR and glutamine to IGP, AICAR and glutamate. The HisF subunit catalyzes the cyclization activity that produces IGP and AICAR from PRFAR using the ammonia provided by the HisH subunit. This chain is Imidazole glycerol phosphate synthase subunit HisF, found in Trichormus variabilis (strain ATCC 29413 / PCC 7937) (Anabaena variabilis).